The primary structure comprises 128 residues: Fluoride-specific ion channel FluC (128 aa).

The next 4 membrane-spanning stretches (helical) occupy residues 3–23 (LYAL…RWWF), 33–53 (TLPL…GAAI), 69–89 (FAIT…AETV), and 99–119 (WTFV…ILGI). Positions 76 and 79 each coordinate Na(+).

It belongs to the fluoride channel Fluc/FEX (TC 1.A.43) family.

It localises to the cell inner membrane. It catalyses the reaction fluoride(in) = fluoride(out). Na(+) is not transported, but it plays an essential structural role and its presence is essential for fluoride channel function. Functionally, fluoride-specific ion channel. Important for reducing fluoride concentration in the cell, thus reducing its toxicity. This Nitrosospira multiformis (strain ATCC 25196 / NCIMB 11849 / C 71) protein is Fluoride-specific ion channel FluC.